Reading from the N-terminus, the 171-residue chain is Large ribosomal subunit protein bL9 (171 aa).

The protein belongs to the bacterial ribosomal protein bL9 family.

Its function is as follows. Binds to the 23S rRNA. This is Large ribosomal subunit protein bL9 from Rickettsia peacockii (strain Rustic).